We begin with the raw amino-acid sequence, 142 residues long: Protein SprT-like (142 aa).

The SprT-like domain occupies 4–138 (YVKKVSIEDF…FACGYCHGRL (135 aa)). Residue His-62 coordinates Zn(2+). Glu-63 is an active-site residue. Residue His-66 coordinates Zn(2+).

This sequence belongs to the SprT family. It depends on Zn(2+) as a cofactor.

It localises to the cytoplasm. The chain is Protein SprT-like from Streptococcus agalactiae serotype Ia (strain ATCC 27591 / A909 / CDC SS700).